The following is a 91-amino-acid chain: Putative antitoxin YutD (91 aa).

Cys77 and Cys81 are disulfide-bonded.

Homodimer, probably forms a complex with cognate toxin YutE.

Functionally, probable antitoxin component of a putative type VII toxin-antitoxin (TA) system. Probably neutralizes cognate toxin YutE. In Bacillus subtilis (strain 168), this protein is Putative antitoxin YutD (yutD).